Consider the following 334-residue polypeptide: uncharacterized protein (334 aa).

This sequence belongs to the Gfo/Idh/MocA family.

This is an uncharacterized protein from Rhizobium meliloti (Ensifer meliloti).